The following is a 325-amino-acid chain: Iodotyrosine dehalogenase 1 homolog (325 aa).

A helical membrane pass occupies residues 42-62; the sequence is VLNVLFTLGVILFVIYQVASL. Residues 63–325 lie on the Cytoplasmic side of the membrane; the sequence is LHRMNKRVEK…KPVEHITKLY (263 aa). FMN-binding positions include 135 to 139, 163 to 164, 273 to 275, and R315; these read RRSCR, SV, and VTS.

It belongs to the nitroreductase family. Requires FMN as cofactor. In terms of tissue distribution, expressed in body-wall, anal depressor and vulval muscles.

It is found in the membrane. Its function is as follows. May contribute to coordination of muscle contraction as regulatory subunit of the nonessential sup-9 potassium channel complex. May act downstream of sup-10. This Caenorhabditis elegans protein is Iodotyrosine dehalogenase 1 homolog.